The sequence spans 361 residues: Diacylglycerol O-acyltransferase 2 (361 aa).

The Cytoplasmic portion of the chain corresponds to 1–42 (MKTLIAAYSGVLRGTGSSILSALQDLFSVTWLNRAKVEKQLQ). The helical transmembrane segment at 43–61 (VISVLQWVLSFLVLGVACS) threads the bilayer. The Lumenal portion of the chain corresponds to 62 to 65 (VILM). The chain crosses the membrane as a helical span at residues 66–85 (YTFCTDCWLIAVLYFTWLVF). Over 86 to 361 (DWNTPKKGGR…LPETEVLEVN (276 aa)) the chain is Cytoplasmic.

It belongs to the diacylglycerol acyltransferase family. In terms of assembly, forms multimeric complexes consisting of several DGAT2 subunits. Interacts with SLC27A1 and this interaction is enhanced in the presence of ZFYVE1.

It is found in the endoplasmic reticulum membrane. The protein resides in the lipid droplet. Its subcellular location is the cytoplasm. It localises to the perinuclear region. The enzyme catalyses an acyl-CoA + a 1,2-diacyl-sn-glycerol = a triacyl-sn-glycerol + CoA. It carries out the reaction all-trans-retinol + an acyl-CoA = an all-trans-retinyl ester + CoA. The catalysed reaction is 2-(9Z-octadecenoyl)-glycerol + (9Z)-octadecenoyl-CoA = 1,2-di-(9Z-octadecenoyl)-sn-glycerol + CoA. It catalyses the reaction 1,2-di-(9Z-octadecenoyl)-sn-glycerol + (9Z)-octadecenoyl-CoA = 1,2,3-tri-(9Z-octadecenoyl)-glycerol + CoA. The enzyme catalyses all-trans-retinol + hexadecanoyl-CoA = all-trans-retinyl hexadecanoate + CoA. It carries out the reaction 1-O-(9Z-octadecenyl)-glycerol + (9Z)-octadecenoyl-CoA = 1-O-(9Z-octadecyl)-3-(9Z-octadecenoyl)-glycerol + CoA. The catalysed reaction is 1-(9Z-octadecenoyl)-glycerol + (9Z)-octadecenoyl-CoA = 1,2-di-(9Z-octadecenoyl)-glycerol + CoA. It catalyses the reaction 1,2-di-(9Z-octadecenoyl)-sn-glycerol + hexadecanoyl-CoA = 1,2-di-(9Z)-octadecenoyl-3-hexadecanoyl-sn-glycerol + CoA. The enzyme catalyses 1,3-di-(9Z-octadecenoyl)-glycerol + (9Z)-octadecenoyl-CoA = 1,2,3-tri-(9Z-octadecenoyl)-glycerol + CoA. It carries out the reaction 2,3-di-(9Z)-octadecenoyl-sn-glycerol + (9Z)-octadecenoyl-CoA = 1,2,3-tri-(9Z-octadecenoyl)-glycerol + CoA. The catalysed reaction is 2-(9Z-octadecenoyl)-glycerol + hexadecanoyl-CoA = 1-hexadecanoyl-2-(9Z-octadecenoyl)-sn-glycerol + CoA. Its pathway is glycerolipid metabolism; triacylglycerol biosynthesis. Its activity is regulated as follows. Inhibited by niacin. Functionally, essential acyltransferase that catalyzes the terminal and only committed step in triacylglycerol synthesis by using diacylglycerol and fatty acyl CoA as substrates. Required for synthesis and storage of intracellular triglycerides. Probably plays a central role in cytosolic lipid accumulation. In liver, is primarily responsible for incorporating endogenously synthesized fatty acids into triglycerides. Also functions as an acyl-CoA retinol acyltransferase (ARAT). Also able to use 1-monoalkylglycerol (1-MAkG) as an acyl acceptor for the synthesis of monoalkyl-monoacylglycerol (MAMAG). This is Diacylglycerol O-acyltransferase 2 (DGAT2) from Bos taurus (Bovine).